The chain runs to 178 residues: Large ribosomal subunit protein uL5 (178 aa).

It belongs to the universal ribosomal protein uL5 family. In terms of assembly, part of the 50S ribosomal subunit; part of the 5S rRNA/L5/L18/L25 subcomplex. Contacts the 5S rRNA and the P site tRNA. Forms a bridge to the 30S subunit in the 70S ribosome.

Functionally, this is one of the proteins that bind and probably mediate the attachment of the 5S RNA into the large ribosomal subunit, where it forms part of the central protuberance. In the 70S ribosome it contacts protein S13 of the 30S subunit (bridge B1b), connecting the 2 subunits; this bridge is implicated in subunit movement. Contacts the P site tRNA; the 5S rRNA and some of its associated proteins might help stabilize positioning of ribosome-bound tRNAs. This Wigglesworthia glossinidia brevipalpis protein is Large ribosomal subunit protein uL5.